The chain runs to 278 residues: Dehydrogenase/reductase SDR family member 4 (278 aa).

An NADP(+)-binding site is contributed by 36 to 60 (LVTASTDGIGFAIARRLAQDGAHVV). Position 92 is an N6-acetyllysine; alternate (K92). K92 bears the N6-succinyllysine; alternate mark. K105 carries the post-translational modification N6-acetyllysine. Residue S169 coordinates substrate. The active-site Proton acceptor is the Y182. K186 serves as a coordination point for NADP(+). The residue at position 216 (K216) is an N6-acetyllysine; alternate. K216 bears the N6-succinyllysine; alternate mark. S220 is subject to Phosphoserine. N6-succinyllysine is present on residues K227 and K234. Residues 276–278 (SRL) carry the Peroxisomal targeting signal motif.

The protein belongs to the short-chain dehydrogenases/reductases (SDR) family. As to quaternary structure, homotetramer.

The protein localises to the peroxisome. The catalysed reaction is a secondary alcohol + NADP(+) = a ketone + NADPH + H(+). It carries out the reaction 3beta-hydroxy-5beta-pregnane-20-one + NADP(+) = 5beta-pregnan-3,20-dione + NADPH + H(+). It catalyses the reaction 5beta-dihydrotestosterone + NADPH + H(+) = 5beta-androstane-3beta,17beta-diol + NADP(+). The enzyme catalyses 5beta-androstane-3,17-dione + NADPH + H(+) = 3beta-hydroxy-5beta-androstane-17-one + NADP(+). The catalysed reaction is isatin + NADPH + H(+) = 3-hydroxyindolin-2-one + NADP(+). It carries out the reaction lithocholate + NADP(+) = 3-oxo-5beta-cholan-24-oate + NADPH + H(+). It catalyses the reaction 3-oxo-5beta-cholan-24-oate + NADPH + H(+) = isolithocholate + NADP(+). Functionally, NADPH-dependent oxidoreductase which catalyzes the reduction of a variety of compounds bearing carbonyl groups including ketosteroids, alpha-dicarbonyl compounds, aldehydes, aromatic ketones and quinones. Reduces 3-ketosteroids and benzil into 3beta-hydroxysteroids and R-benzoin, respectively, in contrast to the stereoselectivity of non-primate DHRS4s which produce 3alpha-hydroxysteroids and S-benzoin. Diplays low activity toward all-trans-retinal and no activity toward 9-cis-retinal as compared to non-primate mammals. In the reverse reaction, catalyze the NAD-dependent oxidation of 3beta-hydroxysteroids and alcohol, but with much lower efficiency. Involved in the metabolism of 3beta-hydroxysteroids, isatin and xenobiotic carbonyl compounds. This chain is Dehydrogenase/reductase SDR family member 4 (DHRS4), found in Pongo abelii (Sumatran orangutan).